The primary structure comprises 325 residues: uncharacterized protein (325 aa).

Residue Y59 is the Proton donor of the active site. Substrate is bound at residue H117.

The protein belongs to the aldo/keto reductase family.

It localises to the cytoplasm. Its subcellular location is the nucleus. This is an uncharacterized protein from Schizosaccharomyces pombe (strain 972 / ATCC 24843) (Fission yeast).